Here is a 97-residue protein sequence, read N- to C-terminus: Lipolysis-activating peptide 1-alpha chain (97 aa).

The signal sequence occupies residues 1–21; the sequence is MNITLFCSVFILISLAGLSVS. Residues 25 to 88 enclose the LCN-type CS-alpha/beta domain; that stretch reads PGNYPMSLYG…FWAAHKNHCK (64 aa). Disulfide bonds link Cys-39–Cys-62, Cys-48–Cys-67, and Cys-52–Cys-69.

This sequence belongs to the long (3 C-C) scorpion toxin superfamily. As to quaternary structure, monomer (edited version) and heterodimer (non-edited version) of this alpha chain and a beta chain (AC D9U2A2). As to expression, expressed by the venom gland.

The protein localises to the secreted. The heterodimer non-edited LVP1 induces lipolysis in rat adipocytes. Induction of lipolysis by LVP1 appears to be mediated through the beta-2 adrenergic receptor pathway (ADRB2). Functionally, the edited BmKBTx-like, similar to beta-toxins, may modulate voltage-gated sodium channels (Nav) and may block voltage-gated potassium channels (Kv). This is Lipolysis-activating peptide 1-alpha chain from Lychas mucronatus (Chinese swimming scorpion).